The primary structure comprises 258 residues: Phosphate import ATP-binding protein PstB (258 aa).

The region spanning 5–247 (LDLKGVNIYY…EKIFSNPSQK (243 aa)) is the ABC transporter domain. An ATP-binding site is contributed by 37–44 (GPSGCGKT).

The protein belongs to the ABC transporter superfamily. Phosphate importer (TC 3.A.1.7) family. The complex is composed of two ATP-binding proteins (PstB), two transmembrane proteins (PstC and PstA) and a solute-binding protein (PstS).

It localises to the cell membrane. The enzyme catalyses phosphate(out) + ATP + H2O = ADP + 2 phosphate(in) + H(+). Part of the ABC transporter complex PstSACB involved in phosphate import. Responsible for energy coupling to the transport system. This is Phosphate import ATP-binding protein PstB from Mycolicibacterium paratuberculosis (strain ATCC BAA-968 / K-10) (Mycobacterium paratuberculosis).